A 495-amino-acid polypeptide reads, in one-letter code: 3-octaprenyl-4-hydroxybenzoate carboxy-lyase (495 aa).

Mn(2+) is bound at residue asparagine 172. Prenylated FMN contacts are provided by residues isoleucine 175–arginine 177, arginine 189–leucine 191, and arginine 194–glycine 195. Residue glutamate 238 coordinates Mn(2+). The active-site Proton donor is aspartate 287.

It belongs to the UbiD family. Homohexamer. Requires prenylated FMN as cofactor. Mn(2+) serves as cofactor.

Its subcellular location is the cell membrane. The enzyme catalyses a 4-hydroxy-3-(all-trans-polyprenyl)benzoate + H(+) = a 2-(all-trans-polyprenyl)phenol + CO2. The protein operates within cofactor biosynthesis; ubiquinone biosynthesis. Its function is as follows. Catalyzes the decarboxylation of 3-octaprenyl-4-hydroxy benzoate to 2-octaprenylphenol, an intermediate step in ubiquinone biosynthesis. The protein is 3-octaprenyl-4-hydroxybenzoate carboxy-lyase of Yersinia pestis bv. Antiqua (strain Angola).